Reading from the N-terminus, the 105-residue chain is DNA-binding protein HU (105 aa).

The protein belongs to the bacterial histone-like protein family.

Its function is as follows. Histone-like DNA-binding protein which is capable of wrapping DNA to stabilize it, and thus to prevent its denaturation under extreme environmental conditions. This chain is DNA-binding protein HU (hup), found in Treponema pallidum (strain Nichols).